Here is a 296-residue protein sequence, read N- to C-terminus: Probable endonuclease 4 (296 aa).

Zn(2+) contacts are provided by His-68, His-109, Glu-144, Asp-178, His-181, His-213, Asp-226, His-228, and Glu-258.

It belongs to the AP endonuclease 2 family. Requires Zn(2+) as cofactor.

The catalysed reaction is Endonucleolytic cleavage to 5'-phosphooligonucleotide end-products.. In terms of biological role, endonuclease IV plays a role in DNA repair. It cleaves phosphodiester bonds at apurinic or apyrimidinic (AP) sites, generating a 3'-hydroxyl group and a 5'-terminal sugar phosphate. This is Probable endonuclease 4 from Staphylococcus epidermidis (strain ATCC 35984 / DSM 28319 / BCRC 17069 / CCUG 31568 / BM 3577 / RP62A).